Here is a 325-residue protein sequence, read N- to C-terminus: GMP reductase (325 aa).

Cys174 (thioimidate intermediate) is an active-site residue. 203-226 is an NADP(+) binding site; the sequence is MIADGGIRTHGDIAKSIRFGASMV.

The protein belongs to the IMPDH/GMPR family. GuaC type 2 subfamily.

The catalysed reaction is IMP + NH4(+) + NADP(+) = GMP + NADPH + 2 H(+). Catalyzes the irreversible NADPH-dependent deamination of GMP to IMP. It functions in the conversion of nucleobase, nucleoside and nucleotide derivatives of G to A nucleotides, and in maintaining the intracellular balance of A and G nucleotides. This Staphylococcus carnosus (strain TM300) protein is GMP reductase.